Here is a 434-residue protein sequence, read N- to C-terminus: Probable tRNA pseudouridine synthase D (434 aa).

Asp-93 (nucleophile) is an active-site residue. One can recognise a TRUD domain in the interval Gly-169–Leu-396.

The protein belongs to the pseudouridine synthase TruD family.

The catalysed reaction is uridine(13) in tRNA = pseudouridine(13) in tRNA. Could be responsible for synthesis of pseudouridine from uracil-13 in transfer RNAs. This chain is Probable tRNA pseudouridine synthase D, found in Halobacterium salinarum (strain ATCC 29341 / DSM 671 / R1).